The sequence spans 201 residues: Dephospho-CoA kinase (201 aa).

The DPCK domain occupies 6–201 (VMGLTGSIGM…RAIREKNPRG (196 aa)). Position 14–19 (14–19 (GMGKSA)) interacts with ATP.

The protein belongs to the CoaE family.

It is found in the cytoplasm. It carries out the reaction 3'-dephospho-CoA + ATP = ADP + CoA + H(+). It participates in cofactor biosynthesis; coenzyme A biosynthesis; CoA from (R)-pantothenate: step 5/5. Catalyzes the phosphorylation of the 3'-hydroxyl group of dephosphocoenzyme A to form coenzyme A. The protein is Dephospho-CoA kinase of Novosphingobium aromaticivorans (strain ATCC 700278 / DSM 12444 / CCUG 56034 / CIP 105152 / NBRC 16084 / F199).